Here is a 424-residue protein sequence, read N- to C-terminus: Putative histone deacetylase complex subunit cti6 (424 aa).

Disordered stretches follow at residues 1 to 49, 117 to 155, 170 to 341, and 381 to 405; these read MPSN…GEVT, SKYL…TMNS, KEKS…PDGT, and AQSA…ETLR. A PHD-type zinc finger spans residues 48-103; sequence VTRCVCGIVESDDEASDGGLYIQCDQCSVWQHGNCVGFADESEVPEVYYCEICHPE. Low complexity predominate over residues 127–137; sequence EASQTEESSST. Ser187 is subject to Phosphoserine. Positions 241–256 are enriched in acidic residues; the sequence is DAPEEETVDTVEEIAD. Over residues 257-266 the composition is skewed to basic and acidic residues; the sequence is EEKHSVKEES. The segment covering 272 to 287 has biased composition (low complexity); sequence QSSQQSTITSISTTTR. Positions 294–303 are enriched in basic and acidic residues; the sequence is REAAAEDKAD. Positions 313–324 are enriched in basic residues; it reads SKTRKVGGRRGK. Over residues 392–405 the composition is skewed to basic and acidic residues; that stretch reads SSKEGPEEEKETLR.

It localises to the cytoplasm. It is found in the nucleus. Its function is as follows. Could be a component of the RPD3C(L) histone deacetylase complex (HDAC). This chain is Putative histone deacetylase complex subunit cti6 (cti6), found in Schizosaccharomyces pombe (strain 972 / ATCC 24843) (Fission yeast).